The chain runs to 228 residues: Ribose-5-phosphate isomerase A (228 aa).

Substrate-binding positions include Thr32 to Thr35, Asp85 to Asp88, and Lys98 to Gly101. Catalysis depends on Glu107, which acts as the Proton acceptor. Lys125 is a binding site for substrate.

The protein belongs to the ribose 5-phosphate isomerase family. Homodimer.

The catalysed reaction is aldehydo-D-ribose 5-phosphate = D-ribulose 5-phosphate. The protein operates within carbohydrate degradation; pentose phosphate pathway; D-ribose 5-phosphate from D-ribulose 5-phosphate (non-oxidative stage): step 1/1. In terms of biological role, catalyzes the reversible conversion of ribose-5-phosphate to ribulose 5-phosphate. This chain is Ribose-5-phosphate isomerase A, found in Ralstonia pickettii (strain 12J).